The sequence spans 101 residues: CRISPR-associated endoribonuclease Cas2 (101 aa).

Position 8 (D8) interacts with Mg(2+).

Belongs to the CRISPR-associated endoribonuclease Cas2 protein family. Homodimer, forms a heterotetramer with a Cas1 homodimer. It depends on Mg(2+) as a cofactor.

CRISPR (clustered regularly interspaced short palindromic repeat), is an adaptive immune system that provides protection against mobile genetic elements (viruses, transposable elements and conjugative plasmids). CRISPR clusters contain sequences complementary to antecedent mobile elements and target invading nucleic acids. CRISPR clusters are transcribed and processed into CRISPR RNA (crRNA). Functions as a ssRNA-specific endoribonuclease. Involved in the integration of spacer DNA into the CRISPR cassette. In Parvibaculum lavamentivorans (strain DS-1 / DSM 13023 / NCIMB 13966), this protein is CRISPR-associated endoribonuclease Cas2.